Consider the following 362-residue polypeptide: B3 domain-containing protein IDEF1 (362 aa).

The tract at residues 30-91 (VPFPNPFPAP…TPTPTPRGFA (62 aa)) is disordered. A compositionally biased stretch (basic residues) spans 48–70 (PHNHNHNHNHNHNIHNSHNHNHN). A DNA-binding region (TF-B3) is located at residues 253-355 (LRKELTKSDV…KFIIRGEKAI (103 aa)).

Polyubiquitinated. Ubiquitination leads to its subsequent degradation via the proteasome pathway. Expressed in roots.

The protein resides in the nucleus. Transcription regulator involved in iron deficiency response and tolerance. May regulate directly iron transporters or other transcription factors involved in iron-deficiency response. Binds specifically to the DNA sequence 5'-CATGC-3' of the IDE1 element found in the promoter of the barley iron deficiency-inducible gene IDS2. The chain is B3 domain-containing protein IDEF1 (IDEF1) from Oryza sativa subsp. japonica (Rice).